The primary structure comprises 631 residues: MSATKLTRREQRAQAQHFIDTLEGTAFPNSKRIYITGTHPGVRVPMREIQLSPTLIGGSKEQPQYEENEAIPVYDTSGPYGDPQIAINVQQGLAKLRQPWIDARGDTEELTVRSSDYTKARLADDGLDELRFSGVLTPKRAKAGRRVTQLHYARRGIITPEMEFIAIRENMGRERIRSEVLRHQHPGMSFGARLPENITAEFVRDEVAAGRAIIPANINHPESEPMIIGRNFLVKVNANIGNSAVTSSIEEEVEKLVWSTRWGADTVMDLSTGRYIHETREWILRNSPVPIGTVPIYQALEKVNGIAEDLTWEAFRDTLLEQAEQGVDYFTIHAGVLLRYVPMTAKRLTGIVSRGGSIMAKWCLSHHQENFLYQHFREICEICAAYDVSLSLGDGLRPGSIQDANDEAQFAELHTLGELTKIAWEYDVQVMIEGPGHVPMQMIRRNMTEELEHCHEAPFYTLGPLTTDIAPGYDHFTSGIGAAMIGWFGCAMLCYVTPKEHLGLPNKEDVKQGLITYKIAAHAADLAKGHPGAQIRDNAMSKARFEFRWEDQFNLALDPFTARAYHDETLPQESGKVAHFCSMCGPKFCSMKISQEVRDYAAAQTIEVGMADMSENFRARGGEIYLRKEEA.

Residues N239, M268, Y297, H333, 353-355 (SRG), 394-397 (DGLR), and E433 each bind substrate. Residue H437 participates in Zn(2+) binding. A substrate-binding site is contributed by Y460. H501 contacts Zn(2+). 3 residues coordinate [4Fe-4S] cluster: C581, C584, and C589.

Belongs to the ThiC family. As to quaternary structure, homodimer. It depends on [4Fe-4S] cluster as a cofactor.

It carries out the reaction 5-amino-1-(5-phospho-beta-D-ribosyl)imidazole + S-adenosyl-L-methionine = 4-amino-2-methyl-5-(phosphooxymethyl)pyrimidine + CO + 5'-deoxyadenosine + formate + L-methionine + 3 H(+). It participates in cofactor biosynthesis; thiamine diphosphate biosynthesis. Functionally, catalyzes the synthesis of the hydroxymethylpyrimidine phosphate (HMP-P) moiety of thiamine from aminoimidazole ribotide (AIR) in a radical S-adenosyl-L-methionine (SAM)-dependent reaction. The sequence is that of Phosphomethylpyrimidine synthase from Escherichia fergusonii (strain ATCC 35469 / DSM 13698 / CCUG 18766 / IAM 14443 / JCM 21226 / LMG 7866 / NBRC 102419 / NCTC 12128 / CDC 0568-73).